Consider the following 477-residue polypeptide: GH30 family xylanase (477 aa).

A signal peptide spans 1–19 (MYSLLIALLCAGTAVDAQA). Asparagine 194, asparagine 237, and asparagine 331 each carry an N-linked (GlcNAc...) asparagine glycan.

This sequence belongs to the glycosyl hydrolase 30 family.

It localises to the secreted. Activity is enhanced by 10 mM Co(2+), Cu 2(2+) and Mn(2+) to levels as high as 44%. Partial inhibition of activity from 5 to 15% is observed in the presence of the following compouinds at a centration of 10 mM (from higher inhibition to lower): EDTA &gt; Mg(2+) &gt; urea, Zn(2+) &gt; Fe(3+). In terms of biological role, xylanase exhibiting endo- and exo-xylanase activity. Shows the highest activity toward beechwood glucuronoxylan, which consists of a beta-1,4-linked xylose backbone decorated with the methylated form of D-glucuronic acid (MeGlcA) attached directly to the main chain at xylose C2. Also acts against wheat arabinoxylan, a xylan without MeGlcA substituents along the main chain, but the xylanase activity is about two orders of magnitude lower than that achieved in the case of beechwood xylan. Shows no activity against carob galactomannan, konjac glucomannan, or barley beta-glucan. The recombinant xylanase also exhibits an exo-activity by releasing processively disaccharide units from the non-reducing end of linear and decorated xylooligosaccharides (XOS). This is GH30 family xylanase from Thermothelomyces thermophilus (strain ATCC 42464 / BCRC 31852 / DSM 1799) (Sporotrichum thermophile).